A 637-amino-acid chain; its full sequence is Threonine--tRNA ligase (637 aa).

One can recognise a TGS domain in the interval 1–61 (MPNVKLPDGN…KEDCSLIIVT (61 aa)). The interval 242-533 (DHRKLGKALD…LIEHYAGKLP (292 aa)) is catalytic. Residues C333, H384, and H510 each contribute to the Zn(2+) site.

Belongs to the class-II aminoacyl-tRNA synthetase family. In terms of assembly, homodimer. Requires Zn(2+) as cofactor.

It localises to the cytoplasm. The catalysed reaction is tRNA(Thr) + L-threonine + ATP = L-threonyl-tRNA(Thr) + AMP + diphosphate + H(+). In terms of biological role, catalyzes the attachment of threonine to tRNA(Thr) in a two-step reaction: L-threonine is first activated by ATP to form Thr-AMP and then transferred to the acceptor end of tRNA(Thr). Also edits incorrectly charged L-seryl-tRNA(Thr). In Legionella pneumophila subsp. pneumophila (strain Philadelphia 1 / ATCC 33152 / DSM 7513), this protein is Threonine--tRNA ligase.